Consider the following 514-residue polypeptide: Proline--tRNA ligase (514 aa).

The protein belongs to the class-II aminoacyl-tRNA synthetase family. ProS type 3 subfamily. In terms of assembly, homodimer.

Its subcellular location is the cytoplasm. It carries out the reaction tRNA(Pro) + L-proline + ATP = L-prolyl-tRNA(Pro) + AMP + diphosphate. Its function is as follows. Catalyzes the attachment of proline to tRNA(Pro) in a two-step reaction: proline is first activated by ATP to form Pro-AMP and then transferred to the acceptor end of tRNA(Pro). This Erythrobacter litoralis (strain HTCC2594) protein is Proline--tRNA ligase.